A 270-amino-acid chain; its full sequence is Carboxy-S-adenosyl-L-methionine synthase (270 aa).

S-adenosyl-L-methionine is bound by residues Y65, 90–92, 143–144, N158, and R225; these read GCS and DI.

Belongs to the class I-like SAM-binding methyltransferase superfamily. Cx-SAM synthase family. Homodimer.

It catalyses the reaction prephenate + S-adenosyl-L-methionine = carboxy-S-adenosyl-L-methionine + 3-phenylpyruvate + H2O. Functionally, catalyzes the conversion of S-adenosyl-L-methionine (SAM) to carboxy-S-adenosyl-L-methionine (Cx-SAM). The chain is Carboxy-S-adenosyl-L-methionine synthase from Chromohalobacter salexigens (strain ATCC BAA-138 / DSM 3043 / CIP 106854 / NCIMB 13768 / 1H11).